Reading from the N-terminus, the 93-residue chain is MARSIKKGPFVDDHLAKKVAAEGTGSKKVLKTWSRRSTITPDFIGLTFAVHNGKKFIPVFVTENMVGHKLGEFAPTRTFYGHAADKKSKLKKK.

It belongs to the universal ribosomal protein uS19 family.

Functionally, protein S19 forms a complex with S13 that binds strongly to the 16S ribosomal RNA. The protein is Small ribosomal subunit protein uS19 of Geobacter metallireducens (strain ATCC 53774 / DSM 7210 / GS-15).